An 899-amino-acid polypeptide reads, in one-letter code: Ewing's tumor-associated antigen 1 homolog (899 aa).

Residues 1–82 (MSRRRKHGDS…TEERYETPKR (82 aa)) form a disordered region. The span at 71–81 (SNTEERYETPK) shows a compositional bias: basic and acidic residues. Positions 105 to 111 (IFWDQNS) match the ATR-activation domain (AAD) motif. Residues 180 to 210 (TKLKSQNQEEELMKLAKQFDKNMEELDVIQE) adopt a coiled-coil conformation. Glycyl lysine isopeptide (Lys-Gly) (interchain with G-Cter in SUMO2) cross-links involve residues Lys416 and Lys444. Ser467 is subject to Phosphoserine. Residues Lys485 and Lys539 each participate in a glycyl lysine isopeptide (Lys-Gly) (interchain with G-Cter in SUMO2) cross-link. The RBM1 motif motif lies at 607–622 (DDVDDDILYQACDDIE). Phosphoserine is present on Ser810. The disordered stretch occupies residues 833–899 (NKTVNPLPGK…AQASSVKKGR (67 aa)). Positions 859–877 (PSKEEEEKNRKCSPEEIQR) are enriched in basic and acidic residues. Positions 868-890 (RKCSPEEIQRKRQAALIRRMAKA) match the RBM2 motif motif.

Interacts (via RBM1 motif) with RPA1. Interacts (via RBM2 motif) with RPA2. Interacts (via the ATR-activation domain motif) with ATR. Phosphorylated by ATR.

It is found in the nucleus. Functionally, replication stress response protein that accumulates at DNA damage sites and promotes replication fork progression and integrity. Recruited to stalled replication forks via interaction with the RPA complex and directly stimulates ATR kinase activity independently of TOPBP1. Probably only regulates a subset of ATR targets. This Bos taurus (Bovine) protein is Ewing's tumor-associated antigen 1 homolog.